The following is a 263-amino-acid chain: Putative aliphatic sulfonates transport permease protein SsuC (263 aa).

The Cytoplasmic segment spans residues 1–13 (MATPVKKWLLRVA). A helical transmembrane segment spans residues 14 to 34 (PWFLPVGIVAVWQLASSVGWL). Over 35-43 (STRILPSPE) the chain is Periplasmic. Residues 44 to 64 (GVVTAFWTLSASGELWQHLAI) form a helical membrane-spanning segment. The ABC transmembrane type-1 domain maps to 58 to 242 (LWQHLAISSW…LLGKLADVSA (185 aa)). Residues 65 to 68 (SSWR) are Cytoplasmic-facing. Residues 69–89 (ALIGFSIGGSLGLILGLISGL) form a helical membrane-spanning segment. At 90–102 (SRWGERLLDTSIQ) the chain is on the periplasmic side. Residues 103–122 (MLRNVPHLALIPLVILWFGI) traverse the membrane as a helical segment. Residues 123–125 (DES) lie on the Cytoplasmic side of the membrane. The helical transmembrane segment at 126–148 (AKIFLVALGTLFPIYINTWHGIR) threads the bilayer. Topologically, residues 149-164 (NIDRGLVEMARSYGLS) are periplasmic. Residues 165 to 185 (GIPLFIHVILPGALPSIMVGV) traverse the membrane as a helical segment. Over 186 to 187 (RF) the chain is Cytoplasmic. Residues 188-208 (ALGLMWLTLIVAETISANSGI) form a helical membrane-spanning segment. Topologically, residues 209-217 (GYLAMNARE) are periplasmic. Residues 218–238 (FLQTDVVVVAIILYALLGKLA) form a helical membrane-spanning segment. Topologically, residues 239-263 (DVSAQLLERLWLRWNPAYHLKEATV) are cytoplasmic.

The protein belongs to the binding-protein-dependent transport system permease family. CysTW subfamily.

The protein localises to the cell inner membrane. Its function is as follows. Part of a binding-protein-dependent transport system for aliphatic sulfonates. Probably responsible for the translocation of the substrate across the membrane. The protein is Putative aliphatic sulfonates transport permease protein SsuC (ssuC) of Escherichia coli (strain K12).